A 173-amino-acid chain; its full sequence is Inorganic pyrophosphatase (173 aa).

Positions 29, 43, and 55 each coordinate substrate. Aspartate 65, aspartate 70, and aspartate 102 together coordinate Mg(2+). Tyrosine 141 contacts substrate.

The protein belongs to the PPase family. Homohexamer. Mg(2+) is required as a cofactor.

Its subcellular location is the cytoplasm. The catalysed reaction is diphosphate + H2O = 2 phosphate + H(+). Its function is as follows. Catalyzes the hydrolysis of inorganic pyrophosphate (PPi) forming two phosphate ions. In Gluconobacter oxydans (strain 621H) (Gluconobacter suboxydans), this protein is Inorganic pyrophosphatase.